The chain runs to 231 residues: Large ribosomal subunit protein uL1 (231 aa).

It belongs to the universal ribosomal protein uL1 family. In terms of assembly, part of the 50S ribosomal subunit.

Functionally, binds directly to 23S rRNA. The L1 stalk is quite mobile in the ribosome, and is involved in E site tRNA release. Its function is as follows. Protein L1 is also a translational repressor protein, it controls the translation of the L11 operon by binding to its mRNA. This Stutzerimonas stutzeri (strain A1501) (Pseudomonas stutzeri) protein is Large ribosomal subunit protein uL1.